Here is a 283-residue protein sequence, read N- to C-terminus: Type III pantothenate kinase (283 aa).

9-16 (DIGNTRLK) is a binding site for ATP. Substrate-binding positions include Y116 and 123-126 (GVDR). Residue D125 is the Proton acceptor of the active site. T149 contacts ATP. T211 contacts substrate.

Belongs to the type III pantothenate kinase family. Homodimer. NH4(+) serves as cofactor. The cofactor is K(+).

It localises to the cytoplasm. It catalyses the reaction (R)-pantothenate + ATP = (R)-4'-phosphopantothenate + ADP + H(+). The protein operates within cofactor biosynthesis; coenzyme A biosynthesis; CoA from (R)-pantothenate: step 1/5. In terms of biological role, catalyzes the phosphorylation of pantothenate (Pan), the first step in CoA biosynthesis. This chain is Type III pantothenate kinase, found in Cupriavidus taiwanensis (strain DSM 17343 / BCRC 17206 / CCUG 44338 / CIP 107171 / LMG 19424 / R1) (Ralstonia taiwanensis (strain LMG 19424)).